The following is a 90-amino-acid chain: DNA-binding protein HTa (90 aa).

Belongs to the bacterial histone-like protein family. Homotetramer.

Histone-like DNA-binding protein which is capable of wrapping DNA to stabilize it, and thus to prevent its denaturation under extreme environmental conditions. In Thermoplasma acidophilum (strain ATCC 25905 / DSM 1728 / JCM 9062 / NBRC 15155 / AMRC-C165), this protein is DNA-binding protein HTa.